The sequence spans 196 residues: Shikimate kinase (196 aa).

32–37 lines the ATP pocket; that stretch reads GAGKSA. Ser-36 lines the Mg(2+) pocket. The substrate site is built by Asp-54, Arg-78, and Gly-100. Arg-138 contacts ATP. Arg-157 serves as a coordination point for substrate. Arg-174 lines the ATP pocket.

The protein belongs to the shikimate kinase family. As to quaternary structure, monomer. Mg(2+) is required as a cofactor.

The protein localises to the cytoplasm. The catalysed reaction is shikimate + ATP = 3-phosphoshikimate + ADP + H(+). The protein operates within metabolic intermediate biosynthesis; chorismate biosynthesis; chorismate from D-erythrose 4-phosphate and phosphoenolpyruvate: step 5/7. Functionally, catalyzes the specific phosphorylation of the 3-hydroxyl group of shikimic acid using ATP as a cosubstrate. The sequence is that of Shikimate kinase from Rhizobium leguminosarum bv. trifolii (strain WSM2304).